The following is a 1130-amino-acid chain: Integrin alpha-6 (1130 aa).

The signal sequence occupies residues 1–23 (MAAAGQLCLLYLSAGLLSRLGAA). The Extracellular segment spans residues 24–1050 (FNLDTREDNV…FPSKTVAQYS (1027 aa)). 7 FG-GAP repeats span residues 30–95 (EDNV…GPCT), 101–166 (NDAD…IEDD), 176–229 (DGRL…FFDM), 283–339 (EQPD…KSAH), 340–402 (LLPE…RWNN), 403–458 (VKPI…GINT), and 459–518 (KPTQ…VTPN). Asparagine 78 carries an N-linked (GlcNAc...) asparagine glycan. 3 disulfides stabilise this stretch: cysteine 86-cysteine 94, cysteine 131-cysteine 154, and cysteine 175-cysteine 188. Residues asparagine 223 and asparagine 323 are each glycosylated (N-linked (GlcNAc...) asparagine). Positions 363, 365, 367, and 371 each coordinate Ca(2+). Asparagine 409 is a glycosylation site (N-linked (GlcNAc...) asparagine). Positions 425, 427, 429, 431, 433, 480, 482, 484, 486, and 488 each coordinate Ca(2+). Disulfide bonds link cysteine 528-cysteine 535, cysteine 541-cysteine 601, cysteine 665-cysteine 671, and cysteine 765-cysteine 776. 4 N-linked (GlcNAc...) asparagine glycosylation sites follow: asparagine 770, asparagine 787, asparagine 930, and asparagine 966. Intrachain disulfides connect cysteine 920-cysteine 967 and cysteine 973-cysteine 978. An N-linked (GlcNAc...) asparagine glycan is attached at asparagine 997. Residues 1051 to 1076 (GVPWWIILVAILAGILMLALLVFILW) form a helical membrane-spanning segment. Valine 1059 and glycine 1064 each carry phosphoserine. The segment at 1077–1083 (KCGFFKR) is interaction with HPS5. Topologically, residues 1077–1130 (KCGFFKRSRYDDSVPRYHAVRIRKEEREIKDEKYIDNLEKKQWITKWNENESYS) are cytoplasmic. Cysteine 1078 carries S-palmitoyl cysteine; by DHHC3 lipidation. The GFFKR motif motif lies at 1079–1083 (GFFKR). A Phosphoserine modification is found at arginine 1103.

It belongs to the integrin alpha chain family. In terms of assembly, heterodimer of an alpha and a beta subunit. The alpha subunit is composed of a heavy and a light chain linked by a disulfide bond. Alpha-6 associates with either beta-1 (ITGB1) or beta-4 (ITGB4) to form ITGA6:ITGB1 and ITGA6:ITGB4, respectively. ITGA6:ITGB1 is found in a complex with CD9; interaction takes place in oocytes and is involved in sperm-egg fusion. ITGA6:ITGB4 is found in a ternary complex with NRG1 and ERBB3. ITGA6:ITGB4 is found in a ternary complex with IGF1 and IGF1R. ITGA6:ITGB4 interacts with IGF2. Interacts with ADAM9. Interacts with RAB21. Interacts with MDK. ITGA6:ITGB1 interacts with MDK; this interaction mediates MDK-induced neurite outgrowth. Interacts with CD82; this interaction down-regulates ITGA6-mediated cell adhesion. Post-translationally, isoforms containing segment A, but not segment B, are the major targets for PMA-induced phosphorylation. Phosphorylation occurs on 'Ser-1103' of isoform alpha-6X1X2A. Phosphorylation is not required for the induction of integrin alpha-6A/beta-1 high affinity but may reduce the affinity for ligand. Undergoes PLAU-mediated cleavage at residues Arg-634-635-Arg in a time-dependent manner to produce processed integrin alpha-6 (alpha6p). Production of alpha6p enhances prostate cancer cell invasion and migration. In terms of processing, palmitoylation by DHHC3 enhances stability and cell surface expression. Integrin alpha-6/beta-4 is predominantly expressed by epithelia. Isoforms containing segment X1 are ubiquitously expressed. Isoforms containing segment X1X2 are expressed in heart, kidney, placenta, colon, duodenum, myoblasts and myotubes, and in a limited number of cell lines; they are always coexpressed with the ubiquitous isoform containing segment X1. In some tissues (e.g. Salivary gland), isoforms containing cytoplasmic segment A and isoforms containing segment B are detected while in others, only isoforms containing one cytoplasmic segment are found (segment A in epidermis and segment B in kidney). Processed integrin alpha-6: Expressed at low levels in normal prostate tissue with elevated levels in prostate cancer tissue (at protein level).

It localises to the cell membrane. In terms of biological role, integrin alpha-6/beta-1 (ITGA6:ITGB1) is a receptor for laminin on platelets. Integrin alpha-6/beta-1 (ITGA6:ITGB1) is present in oocytes and is involved in sperm-egg fusion. Integrin alpha-6/beta-4 (ITGA6:ITGB4) is a receptor for laminin in epithelial cells and it plays a critical structural role in the hemidesmosome. ITGA6:ITGB4 binds to NRG1 (via EGF domain) and this binding is essential for NRG1-ERBB signaling. ITGA6:ITGB4 binds to IGF1 and this binding is essential for IGF1 signaling. ITGA6:ITGB4 binds to IGF2 and this binding is essential for IGF2 signaling. The chain is Integrin alpha-6 (ITGA6) from Homo sapiens (Human).